Consider the following 295-residue polypeptide: MEIRRRPPNPKVRVAHLEYAVPHDDEEPRHILEKIVWEKDREIDAARDKVPLDNLKQQIAKLPPTKDFLGALQAAATKPAVIAEVKKASPSKGVIREDFDPVAIAKAYASGGASCLSVLTDKTFFQGGFDVLVEVRQAVDLPLLCKEFVLSPYQLFQARAAGADAVLLIAAILSDQDLRYLNKAAAALGLTVLVEVHDATEMDRVLSIGGFPLIGINNRDLTSFETDLATTERLLVDFNDRLKQQGVLLVSESGLFSRADLDRVQAAGAGAVLVGEALMRQQDVEAGLVQLIQAG.

It belongs to the TrpC family.

The enzyme catalyses 1-(2-carboxyphenylamino)-1-deoxy-D-ribulose 5-phosphate + H(+) = (1S,2R)-1-C-(indol-3-yl)glycerol 3-phosphate + CO2 + H2O. It participates in amino-acid biosynthesis; L-tryptophan biosynthesis; L-tryptophan from chorismate: step 4/5. The chain is Indole-3-glycerol phosphate synthase from Synechococcus sp. (strain CC9605).